A 201-amino-acid polypeptide reads, in one-letter code: LexA repressor (201 aa).

Positions 28–48 (LREIGGHLGINGTLGVMKHLD) form a DNA-binding region, H-T-H motif. Residues S120 and K157 each act as for autocatalytic cleavage activity in the active site.

It belongs to the peptidase S24 family. As to quaternary structure, homodimer.

The enzyme catalyses Hydrolysis of Ala-|-Gly bond in repressor LexA.. Its function is as follows. Represses a number of genes involved in the response to DNA damage (SOS response), including recA and lexA. In the presence of single-stranded DNA, RecA interacts with LexA causing an autocatalytic cleavage which disrupts the DNA-binding part of LexA, leading to derepression of the SOS regulon and eventually DNA repair. The polypeptide is LexA repressor (Geotalea uraniireducens (strain Rf4) (Geobacter uraniireducens)).